Consider the following 418-residue polypeptide: Replication factor C large subunit (418 aa).

ATP is bound at residue 47 to 54; it reads GSQGTGKT.

Belongs to the activator 1 small subunits family. RfcL subfamily. Heteromultimer composed of small subunits (RfcS) and large subunits (RfcL).

Functionally, part of the RFC clamp loader complex which loads the PCNA sliding clamp onto DNA. This chain is Replication factor C large subunit, found in Thermoplasma acidophilum (strain ATCC 25905 / DSM 1728 / JCM 9062 / NBRC 15155 / AMRC-C165).